We begin with the raw amino-acid sequence, 377 residues long: UPF0754 membrane protein lmo2224 (377 aa).

2 helical membrane-spanning segments follow: residues 1-21 (MSVLFTILLMAVIGGFIGAMT) and 357-377 (YLGGILGGFIGIIQGILAMWI).

Belongs to the UPF0754 family.

It is found in the cell membrane. The sequence is that of UPF0754 membrane protein lmo2224 from Listeria monocytogenes serovar 1/2a (strain ATCC BAA-679 / EGD-e).